The chain runs to 367 residues: Putative ionic transporter y4hA (367 aa).

The next 11 helical transmembrane spans lie at 12-32 (VPLWSWIIPLFGCVIAAMTLA), 39-59 (SVVLLLMSAGLLTGAVFASVH), 74-94 (AILLAVCVTIIEVAIIGSLML), 108-128 (VFAAVMIVLNGVIGLCLVLGG), 143-163 (AALAVLGTLATLSLVLPNFVT), 172-192 (AIQLVVIGLVSVVLYGVFLFV), 221-241 (LAAGALLVLALIAVILLAMLL), 249-269 (VEALGLPQAVVGVTIAGVVLL), 291-311 (VLGSALASIGVTIPVVAAISV), 318-338 (ALGLAPQNLIMLILTLFVGTI), and 347-367 (VLQGAVHLAIFTVFLLLSAIP).

This sequence belongs to the Ca(2+):cation antiporter (CaCA) (TC 2.A.19) family.

It localises to the cell membrane. In terms of biological role, possible cation transporter. This Sinorhizobium fredii (strain NBRC 101917 / NGR234) protein is Putative ionic transporter y4hA.